A 652-amino-acid polypeptide reads, in one-letter code: Sodium-dependent phosphate transporter 1-A (652 aa).

At 1-25 (MESTTLASLAAVSVLAAGAQTDMSD) the chain is on the cytoplasmic side. The helical transmembrane segment at 26-46 (VLWLLILGFVIAFILAFSVGA) threads the bilayer. Topologically, residues 47–66 (NDVANSFGTAVGSGVVTLRQ) are extracellular. The helical transmembrane segment at 67-87 (ACILATIFETVGAMLLGAKVS) threads the bilayer. At 88-104 (ETIRSGIIDVHMYNGSE) the chain is on the cytoplasmic side. Residues 105 to 125 (AVLMAGSISAMFGSAVWQLAA) form a helical membrane-spanning segment. The Extracellular portion of the chain corresponds to 126–162 (SFLKLPISGTHCIVGATIGFSMVARGHQGVKWLELLR). Residues 163-183 (IVASWFLSPLLSGIMSAVLFY) traverse the membrane as a helical segment. Residues 184–201 (FVRKFILNKDDPVPNGLR) are Cytoplasmic-facing. Residues 202-222 (ALPVFYAVTMGINLFSIMFTG) traverse the membrane as a helical segment. At 223–234 (APMLGFDRIPWW) the chain is on the extracellular side. Residues 235–255 (GTLLISLGCAILTALVVWFIV) form a helical membrane-spanning segment. At 256 to 482 (CPRLKKKMQS…IDELEIDKPE (227 aa)) the chain is on the cytoplasmic side. Positions 278–308 (TQLVEKKPSSNGLMDHHPGPPRNYSPVPQTP) are disordered. A compositionally biased stretch (basic and acidic residues) spans 281 to 295 (VEKKPSSNGLMDHHP). Residues 297–308 (PPRNYSPVPQTP) show a composition bias toward pro residues. Residues 483 to 503 (VSTLFQFLQILTACFGSFAHG) form a helical membrane-spanning segment. Residues 504 to 531 (GNDVSNAIGPLVALWLIYDSASVAPSAP) are Extracellular-facing. A helical transmembrane segment spans residues 532–552 (TPIWLLLYGGVGICTGLWIWG). Residues 553–571 (RRVIQTMGKDLTPITPSSG) are Cytoplasmic-facing. The helical transmembrane segment at 572 to 592 (FSIELASAITVVVASNIGLPV) threads the bilayer. Residues 593–621 (STTHCKVGSVVSVGWLRSRKAVDWHLFRN) are Extracellular-facing. A helical membrane pass occupies residues 622–642 (IFIAWFVTVPISGLISAAIMA). The Cytoplasmic portion of the chain corresponds to 643 to 652 (LFYYVILPLT).

This sequence belongs to the inorganic phosphate transporter (PiT) (TC 2.A.20) family.

Its subcellular location is the membrane. Functionally, sodium-phosphate symporter which plays a fundamental housekeeping role in phosphate transport. The chain is Sodium-dependent phosphate transporter 1-A (slc20a1a) from Danio rerio (Zebrafish).